Here is a 222-residue protein sequence, read N- to C-terminus: MQFNPGPPAGFHAPPAKQKACTVTFFLFTPDILNYIVLPVLIFLAQIANVCMETLRIVFLSKGMKYLAPVIAFFEIIIWLLAIVGVLNNLSNIAYFLAYAFGFALGTYVGLVIEEKLSIGMVIMRIITTDGSGDGITEYLQQENYGTTCLDAKGARGGVKMIISLVNRDDVPRITRHIEETNPGAFFSIEDVRYVNQGVFRPKKQNPFTGFIHTLARPRKRV.

3 helical membrane-spanning segments follow: residues phenylalanine 25–alanine 45, leucine 67–leucine 87, and isoleucine 93–isoleucine 113.

This sequence belongs to the UPF0316 family.

The protein resides in the cell membrane. This chain is UPF0316 protein Mboo_0791, found in Methanoregula boonei (strain DSM 21154 / JCM 14090 / 6A8).